A 343-amino-acid chain; its full sequence is S-adenosylmethionine:tRNA ribosyltransferase-isomerase (343 aa).

Belongs to the QueA family. Monomer.

The protein localises to the cytoplasm. It catalyses the reaction 7-aminomethyl-7-carbaguanosine(34) in tRNA + S-adenosyl-L-methionine = epoxyqueuosine(34) in tRNA + adenine + L-methionine + 2 H(+). The protein operates within tRNA modification; tRNA-queuosine biosynthesis. In terms of biological role, transfers and isomerizes the ribose moiety from AdoMet to the 7-aminomethyl group of 7-deazaguanine (preQ1-tRNA) to give epoxyqueuosine (oQ-tRNA). The chain is S-adenosylmethionine:tRNA ribosyltransferase-isomerase from Coxiella burnetii (strain RSA 331 / Henzerling II).